We begin with the raw amino-acid sequence, 344 residues long: Axoneme-associated protein mst101(1) (344 aa).

A run of 12 repeats spans residues 74 to 89, 90 to 105, 106 to 121, 122 to 137, 138 to 153, 154 to 169, 170 to 185, 186 to 201, 202 to 217, 218 to 233, 234 to 249, and 250 to 265. Residues 74–344 are 17 X 16 AA approximate tandem repeats of K-K-K-C-X-E-X-A-[KQ]-K-X-X-E-X-A-X; sequence KKKCAEAAKK…AAQKKCEPKK (271 aa). Positions 206 to 244 are disordered; sequence KEAAEKKKCEERAKKEKEAAEKKKCEERAKKEKEAAEKK. One copy of the 13; approximate repeat lies at 266–281; the sequence is AQKKKCAELAKKAKEA. A 14; approximate repeat occupies 282-297; the sequence is AEKKKCAKKAGEKGSK. Residues 285-315 are compositionally biased toward basic and acidic residues; the sequence is KKCAKKAGEKGSKQSGSDKGKKNGKKNDMKN. Residues 285-318 are disordered; that stretch reads KKCAKKAGEKGSKQSGSDKGKKNGKKNDMKNKCA. The stretch at 298–313 is one 15; approximate repeat; that stretch reads QSGSDKGKKNGKKNDM. Repeat unit 16 spans residues 314-329; it reads KNKCAMLAKKAKEEAL. Residues 330–344 form a 17; truncated repeat; sequence KKKCAAAQKKCEPKK.

Testis. Located in spermatocytes and spermatid bundles.

The protein resides in the cytoplasm. Functionally, possible structural role in the sperm tail. It is associated with axonemal structures. This Drosophila hydei (Fruit fly) protein is Axoneme-associated protein mst101(1) (mst101(1)).